The primary structure comprises 139 residues: Aspartate 1-decarboxylase (139 aa).

The Schiff-base intermediate with substrate; via pyruvic acid role is filled by serine 25. A Pyruvic acid (Ser) modification is found at serine 25. Threonine 57 contributes to the substrate binding site. The active-site Proton donor is tyrosine 58. Residue 73–75 (GAA) coordinates substrate.

The protein belongs to the PanD family. Heterooctamer of four alpha and four beta subunits. It depends on pyruvate as a cofactor. Is synthesized initially as an inactive proenzyme, which is activated by self-cleavage at a specific serine bond to produce a beta-subunit with a hydroxyl group at its C-terminus and an alpha-subunit with a pyruvoyl group at its N-terminus.

The protein resides in the cytoplasm. The catalysed reaction is L-aspartate + H(+) = beta-alanine + CO2. It functions in the pathway cofactor biosynthesis; (R)-pantothenate biosynthesis; beta-alanine from L-aspartate: step 1/1. In terms of biological role, catalyzes the pyruvoyl-dependent decarboxylation of aspartate to produce beta-alanine. The chain is Aspartate 1-decarboxylase from Mycobacterium bovis (strain BCG / Tokyo 172 / ATCC 35737 / TMC 1019).